Reading from the N-terminus, the 556-residue chain is mRNA-capping enzyme subunit beta (556 aa).

2 disordered regions span residues 1–28 and 56–217; these read MKPSRGLSLTDLVNHDDAPPLNNGDNNV and LPPV…QKTS. Residues 63–74 are compositionally biased toward polar residues; it reads VSTSDTGNTSHT. Residues 85 to 96 are compositionally biased toward acidic residues; sequence ESDETDTDDEPG. Composition is skewed to basic and acidic residues over residues 103 to 131 and 139 to 212; these read TKFRFDDEEQQPQKDKLVKGTSSEKKDKQ and IQLD…KDIF.

The protein belongs to the fungal TPase family. As to quaternary structure, heterodimer. The mRNA-capping enzyme is composed of two separate chains alpha and beta, respectively a mRNA guanylyltransferase and an mRNA 5'-triphosphate monophosphatase. The cofactor is Mg(2+).

It is found in the nucleus. The enzyme catalyses a 5'-end triphospho-ribonucleoside in mRNA + H2O = a 5'-end diphospho-ribonucleoside in mRNA + phosphate + H(+). Its function is as follows. First step of mRNA capping. Converts the 5'-triphosphate end of a nascent mRNA chain into a diphosphate end. The polypeptide is mRNA-capping enzyme subunit beta (CET1) (Kluyveromyces lactis (strain ATCC 8585 / CBS 2359 / DSM 70799 / NBRC 1267 / NRRL Y-1140 / WM37) (Yeast)).